The primary structure comprises 67 residues: Conotoxin Cp1.1 (67 aa).

The signal sequence occupies residues 1 to 26 (MMFRLTSVSCFLLVIACLNLFQVVLT). 4 cysteine pairs are disulfide-bonded: Cys29-Cys43, Cys36-Cys48, Cys42-Cys52, and Cys47-Cys56. A Tyrosine amide modification is found at Tyr60. Positions 64-67 (ATFQ) are excised as a propeptide.

It belongs to the conotoxin I2 superfamily. As to expression, expressed by the venom duct.

Its subcellular location is the secreted. This is Conotoxin Cp1.1 from Conus capitaneus (Captain cone).